The primary structure comprises 980 residues: Hypoxia up-regulated protein 1 (980 aa).

The signal sequence occupies residues 1–24 (MREKLSLWAIFCLVVAFLPSQTES). 2 disordered regions span residues 558–682 (EEES…DIAV) and 894–980 (KPKP…EDEL). 2 stretches are compositionally biased toward basic and acidic residues: residues 599–656 (AGKE…PEEK) and 896–906 (KPKDKAKDKNS). A compositionally biased stretch (polar residues) spans 907–916 (TSESSKANST). 2 stretches are compositionally biased toward basic and acidic residues: residues 918–949 (DAEK…KAEE) and 960–980 (TDDK…EDEL). The Prevents secretion from ER motif lies at 977-980 (EDEL).

This sequence belongs to the heat shock protein 70 family.

It is found in the endoplasmic reticulum lumen. Its function is as follows. Has a pivotal role in cytoprotective cellular mechanisms triggered by oxygen deprivation. May play a role as a molecular chaperone and participate in protein folding. The protein is Hypoxia up-regulated protein 1 (hyou1) of Danio rerio (Zebrafish).